The sequence spans 498 residues: Protein flp (498 aa).

4 helical membrane passes run 6–26 (LYFLSISIIILVAISIAIYIT), 389–409 (FNIVTVLMTTLILLAFIFSAY), 433–453 (LSLCICIALALILYALPYLIL), and 471–491 (LALITTLIALFSTLIVILLFL).

It is found in the cell membrane. Its function is as follows. Its precise function is unknown. Has no penicillin-binding activity and is not involved in methicillin resistance. This is Protein flp (flp) from Staphylococcus aureus (strain NCTC 8325 / PS 47).